We begin with the raw amino-acid sequence, 493 residues long: Guanosine-5'-triphosphate,3'-diphosphate pyrophosphatase (493 aa).

This sequence belongs to the GppA/Ppx family. GppA subfamily.

It catalyses the reaction guanosine 3'-diphosphate 5'-triphosphate + H2O = guanosine 3',5'-bis(diphosphate) + phosphate + H(+). It functions in the pathway purine metabolism; ppGpp biosynthesis; ppGpp from GTP: step 2/2. In terms of biological role, catalyzes the conversion of pppGpp to ppGpp. Guanosine pentaphosphate (pppGpp) is a cytoplasmic signaling molecule which together with ppGpp controls the 'stringent response', an adaptive process that allows bacteria to respond to amino acid starvation, resulting in the coordinated regulation of numerous cellular activities. The polypeptide is Guanosine-5'-triphosphate,3'-diphosphate pyrophosphatase (Salmonella agona (strain SL483)).